Reading from the N-terminus, the 129-residue chain is Histone H2A.J (129 aa).

A disordered region spans residues 1-22 (MSGRGKQGGKVRAKAKSRSSRA). An N-acetylserine modification is found at Ser2. Residue Ser2 is modified to Phosphoserine. Lys6 is subject to N6-acetyllysine. The span at 7–19 (QGGKVRAKAKSRS) shows a compositional bias: basic residues. Lys10 is subject to N6-lactoyllysine; alternate. Residues Lys14 and Lys16 each participate in a glycyl lysine isopeptide (Lys-Gly) (interchain with G-Cter in ubiquitin) cross-link. Gln105 is subject to N5-methylglutamine. A Glycyl lysine isopeptide (Lys-Gly) (interchain with G-Cter in ubiquitin) cross-link involves residue Lys120.

It belongs to the histone H2A family. In terms of assembly, the nucleosome is a histone octamer containing two molecules each of H2A, H2B, H3 and H4 assembled in one H3-H4 heterotetramer and two H2A-H2B heterodimers. The octamer wraps approximately 147 bp of DNA. Monoubiquitination of Lys-120 (H2AXK119ub) gives a specific tag for epigenetic transcriptional repression. Following DNA double-strand breaks (DSBs), it is ubiquitinated through 'Lys-63' linkage of ubiquitin moieties. In terms of processing, phosphorylation on Ser-2 is enhanced during mitosis. Phosphorylation on Ser-2 directly represses transcription.

The protein resides in the nucleus. The protein localises to the chromosome. In terms of biological role, core component of nucleosome. Nucleosomes wrap and compact DNA into chromatin, limiting DNA accessibility to the cellular machineries which require DNA as a template. Histones thereby play a central role in transcription regulation, DNA repair, DNA replication and chromosomal stability. DNA accessibility is regulated via a complex set of post-translational modifications of histones, also called histone code, and nucleosome remodeling. The polypeptide is Histone H2A.J (H2A-IX) (Gallus gallus (Chicken)).